Here is a 1001-residue protein sequence, read N- to C-terminus: E3 ubiquitin-protein ligase BRE1B (1001 aa).

Positions 1-40 (MSGLSNKRAAGDGGSGPPEKKMNREEKTTTTLIEPIRLGG) are disordered. Basic and acidic residues predominate over residues 18–28 (PEKKMNREEKT). N6-acetyllysine is present on lysine 20. A Phosphoserine modification is found at serine 42. The stretch at 55 to 91 (KNKKLAERLEQRQACEDELRERIEKLEKRQATDDATL) forms a coiled coil. The interval 122–142 (TEVPGCQEGLTRDVIPRPDPG) is disordered. Coiled-coil stretches lie at residues 189-377 (KAAV…LRSL) and 437-525 (LQKK…ASGS). An N6-acetyllysine mark is found at lysine 355 and lysine 517. The disordered stretch occupies residues 519–647 (RAQASGSSHC…KAKVEEAKRK (129 aa)). The span at 565 to 576 (ALLAGATSATSS) shows a compositional bias: low complexity. Residues lysine 578 and lysine 579 each participate in a glycyl lysine isopeptide (Lys-Gly) (interchain with G-Cter in SUMO2) cross-link. Serine 584 and serine 585 each carry phosphoserine. Composition is skewed to basic and acidic residues over residues 602 to 619 (RGRE…EREG) and 633 to 647 (RADR…AKRK). The stretch at 627 to 946 (AASTLSRADR…EEIKEYKARL (320 aa)) forms a coiled coil. An RING-type zinc finger spans residues 948–987 (CPCCNTRKKDAVLTKCFHVFCFECVRGRYEARQRKCPKCN).

It belongs to the BRE1 family. In terms of assembly, component of the RNF20/40 complex (also known as BRE1 complex) probably composed of 2 copies of RNF20/BRE1A and 2 copies of RNF40/BRE1B. Interacts with UBE2E1/UBCH6. Interacts with RB1 and WAC.

The protein resides in the nucleus. The catalysed reaction is S-ubiquitinyl-[E2 ubiquitin-conjugating enzyme]-L-cysteine + [acceptor protein]-L-lysine = [E2 ubiquitin-conjugating enzyme]-L-cysteine + N(6)-ubiquitinyl-[acceptor protein]-L-lysine.. Its pathway is protein modification; protein ubiquitination. Its function is as follows. Component of the RNF20/40 E3 ubiquitin-protein ligase complex that mediates monoubiquitination of 'Lys-120' of histone H2B (H2BK120ub1). H2BK120ub1 gives a specific tag for epigenetic transcriptional activation and is also prerequisite for histone H3 'Lys-4' and 'Lys-79' methylation (H3K4me and H3K79me, respectively). It thereby plays a central role in histone code and gene regulation. The RNF20/40 complex forms a H2B ubiquitin ligase complex in cooperation with the E2 enzyme UBE2A or UBE2B; reports about the cooperation with UBE2E1/UBCH are contradictory. Required for transcriptional activation of Hox genes. The protein is E3 ubiquitin-protein ligase BRE1B (Rnf40) of Mus musculus (Mouse).